The following is a 248-amino-acid chain: Aspartate/glutamate leucyltransferase (248 aa).

It belongs to the R-transferase family. Bpt subfamily.

The protein localises to the cytoplasm. The enzyme catalyses N-terminal L-glutamyl-[protein] + L-leucyl-tRNA(Leu) = N-terminal L-leucyl-L-glutamyl-[protein] + tRNA(Leu) + H(+). The catalysed reaction is N-terminal L-aspartyl-[protein] + L-leucyl-tRNA(Leu) = N-terminal L-leucyl-L-aspartyl-[protein] + tRNA(Leu) + H(+). Functionally, functions in the N-end rule pathway of protein degradation where it conjugates Leu from its aminoacyl-tRNA to the N-termini of proteins containing an N-terminal aspartate or glutamate. This is Aspartate/glutamate leucyltransferase from Polynucleobacter asymbioticus (strain DSM 18221 / CIP 109841 / QLW-P1DMWA-1) (Polynucleobacter necessarius subsp. asymbioticus).